A 451-amino-acid chain; its full sequence is POC1 centriolar protein homolog B (451 aa).

7 WD repeats span residues 16–55 (GHKA…RAYR), 58–99 (GHKD…SEFK), 101–139 (HTAP…FLYS), 142–181 (RHTH…CVNN), 183–223 (SDSV…LLQH), 226–265 (VHSG…LIYT), and 268–307 (GHTG…LHCK). Ser-321 is modified (phosphoserine). The interval 372–394 (PECSPTTTKKKTEDMSDLPSESQ) is disordered. The stretch at 404–443 (ALEHIMEQLNVLTQTVSILEQRLTLTEDKLKDCLENQQKL) forms a coiled coil.

The protein belongs to the WD repeat POC1 family. In terms of assembly, interacts with POC1A. Interacts with FAM161A. Interacts with CEP44; the interaction is direct and recruits POC1B to centriolar microtubules. Forms a microtubule-associated complex with POC5, CETN2 and FAM161A. Interacts with CCDC15. In terms of processing, phosphorylated in mitotic cells that may be mediated by CDK1.

It is found in the cytoplasm. Its subcellular location is the cytoskeleton. The protein localises to the microtubule organizing center. It localises to the centrosome. The protein resides in the centriole. It is found in the cilium basal body. Its subcellular location is the spindle pole. Plays an important role in centriole assembly and/or stability and ciliogenesis. Involved in early steps of centriole duplication, as well as in the later steps of centriole length control. Acts in concert with POC1A to ensure centriole integrity and proper mitotic spindle formation. Required for primary cilia formation, ciliary length and also cell proliferation. Required for retinal integrity. Acts as a positive regulator of centriole elongation. The sequence is that of POC1 centriolar protein homolog B (POC1B) from Pongo abelii (Sumatran orangutan).